Here is a 286-residue protein sequence, read N- to C-terminus: 3-hydroxybutyryl-CoA dehydrogenase (286 aa).

This sequence belongs to the 3-hydroxyacyl-CoA dehydrogenase family.

It catalyses the reaction 3-hydroxybutanoyl-CoA + NAD(+) = acetoacetyl-CoA + NADH + H(+). It carries out the reaction (3S)-3-hydroxybutanoyl-CoA + NADP(+) = acetoacetyl-CoA + NADPH + H(+). It participates in lipid metabolism; butanoate metabolism. The sequence is that of 3-hydroxybutyryl-CoA dehydrogenase (fadB2) from Mycobacterium tuberculosis (strain CDC 1551 / Oshkosh).